We begin with the raw amino-acid sequence, 145 residues long: Peptide methionine sulfoxide reductase MsrB (145 aa).

Residues 4–127 enclose the MsrB domain; it reads SEELKQRIGD…NSAALKFIPY (124 aa). Cys116 serves as the catalytic Nucleophile.

This sequence belongs to the MsrB Met sulfoxide reductase family.

It catalyses the reaction L-methionyl-[protein] + [thioredoxin]-disulfide + H2O = L-methionyl-(R)-S-oxide-[protein] + [thioredoxin]-dithiol. This Streptococcus pyogenes serotype M6 (strain ATCC BAA-946 / MGAS10394) protein is Peptide methionine sulfoxide reductase MsrB.